A 32-amino-acid polypeptide reads, in one-letter code: Snaclec (32 aa).

Dimer; disulfide-linked. As to expression, expressed by the venom gland.

The protein resides in the secreted. Interferes with one step of hemostasis (modulation of platelet aggregation, or coagulation cascade, for example). In Bothrops diporus (Chaco lancehead), this protein is Snaclec.